A 132-amino-acid polypeptide reads, in one-letter code: MYAENYKIFEAIIDKLREFDGAIIVEGPRDEISLRKLGVRAEIIKLSRLPLAEVALIASQYKEVMILTDLDRKGEELAKKLAMYLEGYGCKVDTETRRSLKMIAKKDIKGIEDLYNLYLRVSLRFWPPEEGI.

The 81-residue stretch at 20–100 (DGAIIVEGPR…KVDTETRRSL (81 aa)) folds into the Toprim domain. Positions 26, 69, and 71 each coordinate Mg(2+).

This sequence belongs to the UPF0292 family. Mg(2+) serves as cofactor.

The polypeptide is UPF0292 protein PYRAB04740 (Pyrococcus abyssi (strain GE5 / Orsay)).